The primary structure comprises 426 residues: UPF0597 protein CLB_1750 (426 aa).

It belongs to the UPF0597 family.

This is UPF0597 protein CLB_1750 from Clostridium botulinum (strain ATCC 19397 / Type A).